The chain runs to 738 residues: Vesicle-fusing ATPase (738 aa).

ATP contacts are provided by residues 507–512 (NGIINY) and 547–554 (PGCGKSSL).

This sequence belongs to the AAA ATPase family. Interacts with syn7A, snpA and snpC. Mg(2+) serves as cofactor.

The protein localises to the cytoplasmic vesicle membrane. It localises to the endosome membrane. It carries out the reaction ATP + H2O = ADP + phosphate + H(+). Required for vesicle-mediated transport. Involved in endocytosis and endosome-endosome fusion. May be required for transport from the endoplasmic reticulum to the Golgi stack, and for the fusion of transport vesicles within the Golgi cisternae. Required for cell polarity, locomotion and chemotaxis. The polypeptide is Vesicle-fusing ATPase (nsfA) (Dictyostelium discoideum (Social amoeba)).